Consider the following 144-residue polypeptide: Transcriptional regulator SlyA (144 aa).

Positions 2–135 (ESPLGSDLAR…LNKIISKLEK (134 aa)) constitute an HTH marR-type domain. A DNA-binding region (H-T-H motif) is located at residues 49-72 (QIQLAKAIGIEQPSLVRTLDQLEE).

Belongs to the SlyA family. As to quaternary structure, homodimer.

Its function is as follows. Transcription regulator that can specifically activate or repress expression of target genes. This Blochmanniella pennsylvanica (strain BPEN) protein is Transcriptional regulator SlyA.